The sequence spans 282 residues: MSLYRDHQALEQLTLGKTTLYRDQYDASLLQAVPRNMNREPLEIFPDNLPFHGADIWTLYELSWLNNRGLPQVAVGHVSLNAASTNLIESKSFKLYLNSFNQTRFENWQAVEETLQRDLAACAEGEVEVALHHLDHFNNQPISTFTGECIDDQDIEVTEYDFNRHYLQNAAQGPQVEEVLVSHLLKSNCLITHQPDWGSVQIHYKGSKINREALLRYLISFRHHNEFHEQCVERIFSDLQQLCAPEKLSVYARYTRRGGLDINPWRTNSEGFVPATGRLARQ.

88-90 (IES) provides a ligand contact to substrate. Residue 90–91 (SK) participates in NADPH binding. Cys189 functions as the Thioimide intermediate in the catalytic mechanism. Asp196 (proton donor) is an active-site residue. 228-229 (HE) contacts substrate. 257–258 (RG) serves as a coordination point for NADPH.

The protein belongs to the GTP cyclohydrolase I family. QueF type 2 subfamily. As to quaternary structure, homodimer.

The protein localises to the cytoplasm. The enzyme catalyses 7-aminomethyl-7-carbaguanine + 2 NADP(+) = 7-cyano-7-deazaguanine + 2 NADPH + 3 H(+). The protein operates within tRNA modification; tRNA-queuosine biosynthesis. Its function is as follows. Catalyzes the NADPH-dependent reduction of 7-cyano-7-deazaguanine (preQ0) to 7-aminomethyl-7-deazaguanine (preQ1). The chain is NADPH-dependent 7-cyano-7-deazaguanine reductase from Photorhabdus laumondii subsp. laumondii (strain DSM 15139 / CIP 105565 / TT01) (Photorhabdus luminescens subsp. laumondii).